Reading from the N-terminus, the 349-residue chain is DNA polymerase IV (349 aa).

A UmuC domain is found at I7 to G188. The Mg(2+) site is built by D11 and D106. E107 is an active-site residue.

It belongs to the DNA polymerase type-Y family. As to quaternary structure, monomer. Mg(2+) is required as a cofactor.

It localises to the cytoplasm. It catalyses the reaction DNA(n) + a 2'-deoxyribonucleoside 5'-triphosphate = DNA(n+1) + diphosphate. In terms of biological role, poorly processive, error-prone DNA polymerase involved in untargeted mutagenesis. Copies undamaged DNA at stalled replication forks, which arise in vivo from mismatched or misaligned primer ends. These misaligned primers can be extended by PolIV. Exhibits no 3'-5' exonuclease (proofreading) activity. May be involved in translesional synthesis, in conjunction with the beta clamp from PolIII. This is DNA polymerase IV from Francisella tularensis subsp. novicida (strain U112).